We begin with the raw amino-acid sequence, 213 residues long: MKVLITGFDPFGGESINPALEAVKKLPNTISNAEIIKLEIPTVFKKSLEKIEANILAHKPDIVISIGQAGGRFGITPERVAINIDDARIEDNEKNQPIDLKVFEDGENAYFTTLPIKAMVKEMQESGIPSSVSNSAGTFVCNHVMYGVLYMINKKYPNIKGGFIHVPYIPSQVVSKPNMPSMSIEDISKGLELSVKAAVENNTDIKTAQGEIC.

Active-site residues include glutamate 78, cysteine 141, and histidine 165.

Belongs to the peptidase C15 family. As to quaternary structure, homotetramer.

It is found in the cytoplasm. The catalysed reaction is Release of an N-terminal pyroglutamyl group from a polypeptide, the second amino acid generally not being Pro.. Its function is as follows. Removes 5-oxoproline from various penultimate amino acid residues except L-proline. This Clostridium botulinum (strain Alaska E43 / Type E3) protein is Pyrrolidone-carboxylate peptidase.